The chain runs to 100 residues: Large ribosomal subunit protein uL23 (100 aa).

It belongs to the universal ribosomal protein uL23 family. Part of the 50S ribosomal subunit. Contacts protein L29, and trigger factor when it is bound to the ribosome.

One of the early assembly proteins it binds 23S rRNA. One of the proteins that surrounds the polypeptide exit tunnel on the outside of the ribosome. Forms the main docking site for trigger factor binding to the ribosome. This chain is Large ribosomal subunit protein uL23, found in Aggregatibacter actinomycetemcomitans (Actinobacillus actinomycetemcomitans).